The chain runs to 158 residues: Hypoxanthine DNA glycosylase (158 aa).

Asparagine 39 is an active-site residue.

This sequence belongs to the uracil-DNA glycosylase (UDG) superfamily. Type 6 (HDG) family.

Functionally, excises hypoxanthine, a deamination product of adenine, from double-stranded DNA. Acts on double-stranded DNA containing G/I, T/I, A/I and C/I base pairs, but not on single-stranded inosine-containing DNA. Also has minor xanthine DNA glycosylase activity. Lacks any detectable uracil-DNA glycosylase activity. In Methanosarcina barkeri (strain Fusaro / DSM 804), this protein is Hypoxanthine DNA glycosylase.